The sequence spans 302 residues: Glycine--tRNA ligase alpha subunit (302 aa).

The protein belongs to the class-II aminoacyl-tRNA synthetase family. Tetramer of two alpha and two beta subunits.

The protein resides in the cytoplasm. It catalyses the reaction tRNA(Gly) + glycine + ATP = glycyl-tRNA(Gly) + AMP + diphosphate. This chain is Glycine--tRNA ligase alpha subunit, found in Haemophilus influenzae (strain PittGG).